Here is an 840-residue protein sequence, read N- to C-terminus: MHILIDVQGYQSESKVRGIGRSTPAMSRAIIENAGEHRVSILINGMYPIDNINDVKMAYRDLLTDEDMFIFSAVAPTAYRHIENHGRSKAAQAARDIAIANIAPDIVYVISFFEGHSDSYTVSIPADNVPWKTVCVCHDLIPLLNKERYLGDPNFREFYMNKLAEFERADAIFAISQSAAQEVIEYTDIASDRVLNISSAVGEEFAVIDYSAERIQSLKDKYSLPDEFILSLAMIEPRKNIEALIHAYSLLPAELQQRYPMVLAYKVQPEQLERILRLAESYGLSRSQLIFTGFLTDDDLIALYNLCKLFVFPSLHEGFGLPPLEAMRCGAATLGSNITSLPEVIGWEDAMFNPHDVQDIRRVMEKALTDEAFYRELKAHALAQSAKFSWANTAHLAIEGFTRLLQSSQETDAGQAESVTASRLQMMQKIDALSEVDRLGLAWAVARNSFKRHTRKLLVDISVLAQHDAKTGIQRVSRSILSELLKSGVPGYEVSAVYYTPGECYRYANQYLSSHFPGEFGADEPVLFSKDDVLIATDLTAHLFPELVTQIDSMRAAGAFACFVVHDILPLRRPEWSIEGIQRDFPIWLSCLAEHADRLICVSASVAEDVKAWIAENRHWVKPNPLQTVSNFHLGADLDASVPSTGMPDNAQALLAAMAAAPSFIMVGTMEPRKGHAQTLAAFEELWREGKDYNLFIVGKQGWNVDSLCEKLRHHPQLNKKLFWLQNISDEFLAELYARSRALIFASQGEGFGLPLIEAAQKKLPVIIRDIPVFKEIAQEHAWYFSGEAPSDIAKAVEEWLALYEQNAHPRSENINWLTWKQSAEFLLKNLPIIAPAAKQ.

An alpha-(1-&gt;2)-mannosyltransferase region spans residues 2-399; sequence HILIDVQGYQ…WANTAHLAIE (398 aa). The interval 456 to 829 is alpha-(1-&gt;3)-mannosyltransferase; the sequence is KLLVDISVLA…WKQSAEFLLK (374 aa).

It belongs to the glycosyltransferase group 1 family. Glycosyltransferase 4 subfamily. In terms of assembly, monomer. Interacts with the C-terminal region of WbdD. Interacts with WbdD via a surface-exposed alpha-helix in the C-terminal mannosyltransferase domain. However, the C-terminal domain is unable to interact with WbdD in the absence of its N-terminal partner.

It is found in the cell inner membrane. The enzyme catalyses [alpha-D-Man-(1-&gt;3)-alpha-D-Man-(1-&gt;3)-alpha-D-Man-(1-&gt;2)-alpha-D-Man-(1-&gt;2)](n)-alpha-D-Man-(1-&gt;3)-alpha-D-Man-(1-&gt;3)-alpha-D-Man-(1-&gt;3)-alpha-D-GlcNAc-di-trans,octa-cis-undecaprenyl diphosphate + 2 GDP-alpha-D-mannose = alpha-D-Man-(1-&gt;2)-alpha-D-Man-(1-&gt;2)-[alpha-D-Man-(1-&gt;3)-alpha-D-Man-(1-&gt;3)-alpha-D-Man-(1-&gt;2)-alpha-D-Man-(1-&gt;2)](n)-alpha-D-Man-(1-&gt;3)-alpha-D-Man-(1-&gt;3)-alpha-D-Man-(1-&gt;3)-alpha-D-GlcNAc-di-trans,octa-cis-undecaprenyl diphosphate + 2 GDP + 2 H(+). The catalysed reaction is alpha-D-Man-(1-&gt;2)-alpha-D-Man-(1-&gt;2)-[alpha-D-Man-(1-&gt;3)-alpha-D-Man-(1-&gt;3)-alpha-D-Man-(1-&gt;2)-alpha-D-Man-(1-&gt;2)](n)-alpha-D-Man-(1-&gt;3)-alpha-D-Man-(1-&gt;3)-alpha-D-Man-(1-&gt;3)-alpha-D-GlcNAc-di-trans,octa-cis-undecaprenyl diphosphate + 2 GDP-alpha-D-mannose = [alpha-D-Man-(1-&gt;3)-alpha-D-Man-(1-&gt;3)-alpha-D-Man-(1-&gt;2)-alpha-D-Man-(1-&gt;2)](n+1)-alpha-D-Man-(1-&gt;3)-alpha-D-Man-(1-&gt;3)-alpha-D-Man-(1-&gt;3)-alpha-D-GlcNAc-di-trans,octa-cis-undecaprenyl diphosphate + 2 GDP + 2 H(+). The protein operates within bacterial outer membrane biogenesis; LPS O-antigen biosynthesis. The alpha-(1-&gt;2)-mannosyltransferase activity of the N-terminal domain is regulated by the activity of the C-terminal alpha-(1-&gt;3)-mannosyltransferase. The relative concentration of WbdA and WbdD is critical in determining the O polysaccharide (OPS) modal chain length. OPS chain length increases with increasing concentration of WbdA, but the maximum length does not increase beyond the wild-type modal length, despite substantial increases in WbdA concentration. Its function is as follows. Mannosyltransferase involved in the biosynthesis of the repeat unit of the lipopolysaccharide (LPS) O-antigen region. Catalyzes the polymerization of a tetrasaccharide repeat unit containing two alpha-(1-&gt;3)- and two alpha-(1-&gt;2)-linked mannopyranose residues. Extension is terminated by the action of the chain terminator bifunctional methyltransferase/kinase WbdD. This Escherichia coli protein is Serotype-specific mannosyltransferase WbdA.